The chain runs to 47 residues: Putative protein PinH (47 aa).

The Resolvase/invertase-type recombinase catalytic domain occupies 1 to 47 (MWHLVVLLEELCERGINFRALAQSIFAQQWGDECCKSKTICDLKVIV).

The protein belongs to the site-specific recombinase resolvase family.

This Escherichia coli (strain K12) protein is Putative protein PinH (pinH).